A 28-amino-acid chain; its full sequence is Dermaseptin-SP1 (28 aa).

In terms of tissue distribution, expressed by the skin glands.

Its subcellular location is the secreted. In terms of biological role, probable antimicrobial peptide which stimulates insulin-release in glucose-responsive BRIN-BD 11 cells. This chain is Dermaseptin-SP1, found in Agalychnis spurrelli (Gliding leaf frog).